Reading from the N-terminus, the 136-residue chain is uncharacterized protein (136 aa).

4 consecutive transmembrane segments (helical) span residues 10-32 (SAGI…FIWI), 44-66 (LRCG…ILHF), 70-89 (VLLL…KTLL), and 102-124 (IAGV…WLLF).

It is found in the cell membrane. This is an uncharacterized protein from Archaeoglobus fulgidus (strain ATCC 49558 / DSM 4304 / JCM 9628 / NBRC 100126 / VC-16).